A 129-amino-acid polypeptide reads, in one-letter code: Phosphoribosyl-AMP cyclohydrolase (129 aa).

Asp-94 is a Mg(2+) binding site. A Zn(2+)-binding site is contributed by Cys-95. Positions 96 and 98 each coordinate Mg(2+). Positions 111 and 118 each coordinate Zn(2+).

Belongs to the PRA-CH family. Homodimer. The cofactor is Mg(2+). Zn(2+) is required as a cofactor.

The protein resides in the cytoplasm. It carries out the reaction 1-(5-phospho-beta-D-ribosyl)-5'-AMP + H2O = 1-(5-phospho-beta-D-ribosyl)-5-[(5-phospho-beta-D-ribosylamino)methylideneamino]imidazole-4-carboxamide. It functions in the pathway amino-acid biosynthesis; L-histidine biosynthesis; L-histidine from 5-phospho-alpha-D-ribose 1-diphosphate: step 3/9. Functionally, catalyzes the hydrolysis of the adenine ring of phosphoribosyl-AMP. The polypeptide is Phosphoribosyl-AMP cyclohydrolase (Corynebacterium efficiens (strain DSM 44549 / YS-314 / AJ 12310 / JCM 11189 / NBRC 100395)).